The following is a 364-amino-acid chain: DNA replication and repair protein RecF (364 aa).

30–37 contributes to the ATP binding site; it reads GKNAQGKT.

Belongs to the RecF family.

The protein localises to the cytoplasm. Its function is as follows. The RecF protein is involved in DNA metabolism; it is required for DNA replication and normal SOS inducibility. RecF binds preferentially to single-stranded, linear DNA. It also seems to bind ATP. The polypeptide is DNA replication and repair protein RecF (Geotalea uraniireducens (strain Rf4) (Geobacter uraniireducens)).